The sequence spans 488 residues: Glycogen synthase (488 aa).

Arginine 20 is an ADP-alpha-D-glucose binding site.

This sequence belongs to the glycosyltransferase 1 family. Bacterial/plant glycogen synthase subfamily.

It carries out the reaction [(1-&gt;4)-alpha-D-glucosyl](n) + ADP-alpha-D-glucose = [(1-&gt;4)-alpha-D-glucosyl](n+1) + ADP + H(+). It functions in the pathway glycan biosynthesis; glycogen biosynthesis. Functionally, synthesizes alpha-1,4-glucan chains using ADP-glucose. The protein is Glycogen synthase of Chlorobaculum tepidum (strain ATCC 49652 / DSM 12025 / NBRC 103806 / TLS) (Chlorobium tepidum).